The chain runs to 41 residues: Large ribosomal subunit protein bL36 (41 aa).

Belongs to the bacterial ribosomal protein bL36 family.

This chain is Large ribosomal subunit protein bL36, found in Hyphomonas neptunium (strain ATCC 15444).